Reading from the N-terminus, the 202-residue chain is HTH-type transcriptional regulator BetI 1 (202 aa).

Residues 8–68 (PIRRRQLIQA…SAMRQILWDL (61 aa)) form the HTH tetR-type domain. Positions 31-50 (TIARIAKRAGVSAGIISHYF) form a DNA-binding region, H-T-H motif.

The protein operates within amine and polyamine biosynthesis; betaine biosynthesis via choline pathway [regulation]. Functionally, repressor involved in the biosynthesis of the osmoprotectant glycine betaine. It represses transcription of the choline transporter BetT and the genes of BetAB involved in the synthesis of glycine betaine. This is HTH-type transcriptional regulator BetI 1 from Chromohalobacter salexigens (strain ATCC BAA-138 / DSM 3043 / CIP 106854 / NCIMB 13768 / 1H11).